The primary structure comprises 196 residues: Phosphoheptose isomerase (196 aa).

In terms of domain architecture, SIS spans 36 to 195 (VIQAYKLGKK…EKELFGEKVD (160 aa)). 51–53 (NGG) contacts substrate. Residues histidine 60 and glutamate 64 each coordinate Zn(2+). Substrate is bound by residues glutamate 64, 93-94 (ND), 119-121 (STS), serine 124, and glutamine 171. Zn(2+) contacts are provided by glutamine 171 and histidine 179.

Belongs to the SIS family. GmhA subfamily. Zn(2+) is required as a cofactor.

Its subcellular location is the cytoplasm. It carries out the reaction 2 D-sedoheptulose 7-phosphate = D-glycero-alpha-D-manno-heptose 7-phosphate + D-glycero-beta-D-manno-heptose 7-phosphate. It participates in carbohydrate biosynthesis; D-glycero-D-manno-heptose 7-phosphate biosynthesis; D-glycero-alpha-D-manno-heptose 7-phosphate and D-glycero-beta-D-manno-heptose 7-phosphate from sedoheptulose 7-phosphate: step 1/1. Functionally, catalyzes the isomerization of sedoheptulose 7-phosphate in D-glycero-D-manno-heptose 7-phosphate. In Clostridium acetobutylicum (strain ATCC 824 / DSM 792 / JCM 1419 / IAM 19013 / LMG 5710 / NBRC 13948 / NRRL B-527 / VKM B-1787 / 2291 / W), this protein is Phosphoheptose isomerase.